A 418-amino-acid polypeptide reads, in one-letter code: Alpha-tubulin N-acetyltransferase 1 (418 aa).

The 186-residue stretch at 1 to 186 folds into the N-acetyltransferase domain; it reads MEFEFDVHKI…NNFVVFEGFF (186 aa). Acetyl-CoA-binding positions include 120–133 and 156–165; these read FYIH…GFGK and SEKFLSFLRK. Disordered regions lie at residues 237-292 and 322-353; these read SSLG…MNLS and QIKE…HQND. Over residues 277–287 the composition is skewed to basic and acidic residues; sequence QEDHSQRRRTS. Positions 329–353 are enriched in polar residues; that stretch reads RTDSSAQEGRTQDRPNGSNSQHQND.

The protein belongs to the acetyltransferase ATAT1 family.

It is found in the cytoplasm. Its subcellular location is the membrane. The protein localises to the clathrin-coated pit. The protein resides in the cell junction. It localises to the focal adhesion. It is found in the cell projection. Its subcellular location is the axon. The protein localises to the cytoskeleton. The protein resides in the spindle. It catalyses the reaction L-lysyl-[alpha-tubulin] + acetyl-CoA = N(6)-acetyl-L-lysyl-[alpha-tubulin] + CoA + H(+). Specifically acetylates 'Lys-40' in alpha-tubulin on the lumenal side of microtubules. Promotes microtubule destabilization and accelerates microtubule dynamics; this activity may be independent of acetylation activity. Acetylates alpha-tubulin with a slow enzymatic rate, due to a catalytic site that is not optimized for acetyl transfer. Enters the microtubule through each end and diffuses quickly throughout the lumen of microtubules. Acetylates only long/old microtubules because of its slow acetylation rate since it does not have time to act on dynamically unstable microtubules before the enzyme is released. May be involved in neuron development. The protein is Alpha-tubulin N-acetyltransferase 1 of Xenopus laevis (African clawed frog).